Here is a 328-residue protein sequence, read N- to C-terminus: Beta-ketoacyl-[acyl-carrier-protein] synthase III (328 aa).

Catalysis depends on residues Cys-114 and His-253. Positions 254–258 (QANIR) are ACP-binding. Asn-283 is an active-site residue.

Belongs to the thiolase-like superfamily. FabH family. Homodimer.

It localises to the cytoplasm. The enzyme catalyses malonyl-[ACP] + acetyl-CoA + H(+) = 3-oxobutanoyl-[ACP] + CO2 + CoA. It functions in the pathway lipid metabolism; fatty acid biosynthesis. Its function is as follows. Catalyzes the condensation reaction of fatty acid synthesis by the addition to an acyl acceptor of two carbons from malonyl-ACP. Catalyzes the first condensation reaction which initiates fatty acid synthesis and may therefore play a role in governing the total rate of fatty acid production. Possesses both acetoacetyl-ACP synthase and acetyl transacylase activities. Its substrate specificity determines the biosynthesis of branched-chain and/or straight-chain of fatty acids. The chain is Beta-ketoacyl-[acyl-carrier-protein] synthase III from Clostridioides difficile (strain 630) (Peptoclostridium difficile).